A 1414-amino-acid chain; its full sequence is Phenyloxazoline synthase MbtB (1414 aa).

The Carrier 1 domain occupies 5-78 (TACSEIIRAE…AWSQLVSAGT (74 aa)). An O-(pantetheine 4'-phosphoryl)serine modification is found at Ser39. Residues 96–394 (EGEPFPVAPM…SSLLLDVDLT (299 aa)) are condensation/cyclization. The tract at residues 579 to 975 (SYAQLRDQAS…RLPGVHAAAA (397 aa)) is adenylation. Residues 1057 to 1135 (APRTVLQRAL…ALAQLLTGRE (79 aa)) form the Carrier 2 domain. O-(pantetheine 4'-phosphoryl)serine is present on Ser1094. The interval 1188–1413 (GAVLVFPHAG…AVARMVSADV (226 aa)) is thioesterase.

This sequence belongs to the ATP-dependent AMP-binding enzyme family. MbtB subfamily. Pantetheine 4'-phosphate is required as a cofactor. 4'-phosphopantetheine is transferred from CoA to a specific serine in each of the two carrier protein domains, leading to their activation from apo to holo forms.

The protein operates within siderophore biosynthesis; mycobactin biosynthesis. Its function is as follows. Involved in the initial steps of the mycobactin biosynthetic pathway. Putatively couples activated salicylic acid with serine or threonine and cyclizes this precursor to the hydroxyphenyloxazoline ring system present in this class of siderophores. Essential for growth in macrophages. The chain is Phenyloxazoline synthase MbtB (mbtB) from Mycobacterium tuberculosis (strain CDC 1551 / Oshkosh).